Reading from the N-terminus, the 292-residue chain is Ribosomal protein L11 methyltransferase (292 aa).

S-adenosyl-L-methionine contacts are provided by Thr-144, Gly-165, Asp-187, and Asn-229.

This sequence belongs to the methyltransferase superfamily. PrmA family.

It localises to the cytoplasm. It catalyses the reaction L-lysyl-[protein] + 3 S-adenosyl-L-methionine = N(6),N(6),N(6)-trimethyl-L-lysyl-[protein] + 3 S-adenosyl-L-homocysteine + 3 H(+). In terms of biological role, methylates ribosomal protein L11. This Ectopseudomonas mendocina (strain ymp) (Pseudomonas mendocina) protein is Ribosomal protein L11 methyltransferase.